Here is a 267-residue protein sequence, read N- to C-terminus: MTRIAIVGASGRMGKVLVEAVCDNPDASLGAASVRVGSSLVGADAGEIAGLGKKGVACVDDLAQVMDDFDVIIDFTSPETTLELLALCRKEGKAIVIGTTGFSDQQKTLLAEAAQDCPVVFAPNMSVGVNLLLNILALTAKTLGDDYDVEVIEAHHRFKKDAPSGTALRLGEVVAEAMGRNLNECAVYGREGITGERDKKTIGFETIRAGDIVGEHTVMFATMGERIEITHKASSRMTFAKGAVKAALWLHGVAPGLYDMQDVLGLK.

8–13 provides a ligand contact to NAD(+); sequence GASGRM. Residue Arg-35 coordinates NADP(+). NAD(+) is bound by residues 98–100 and 122–125; these read GTT and APNM. His-155 acts as the Proton donor/acceptor in catalysis. Position 156 (His-156) interacts with (S)-2,3,4,5-tetrahydrodipicolinate. The Proton donor role is filled by Lys-159. 165–166 contributes to the (S)-2,3,4,5-tetrahydrodipicolinate binding site; it reads GT.

Belongs to the DapB family.

Its subcellular location is the cytoplasm. The enzyme catalyses (S)-2,3,4,5-tetrahydrodipicolinate + NAD(+) + H2O = (2S,4S)-4-hydroxy-2,3,4,5-tetrahydrodipicolinate + NADH + H(+). It catalyses the reaction (S)-2,3,4,5-tetrahydrodipicolinate + NADP(+) + H2O = (2S,4S)-4-hydroxy-2,3,4,5-tetrahydrodipicolinate + NADPH + H(+). The protein operates within amino-acid biosynthesis; L-lysine biosynthesis via DAP pathway; (S)-tetrahydrodipicolinate from L-aspartate: step 4/4. Catalyzes the conversion of 4-hydroxy-tetrahydrodipicolinate (HTPA) to tetrahydrodipicolinate. This chain is 4-hydroxy-tetrahydrodipicolinate reductase, found in Hahella chejuensis (strain KCTC 2396).